A 196-amino-acid chain; its full sequence is Probable GTP-binding protein EngB (196 aa).

The EngB-type G domain occupies 22–194 (DKKEIAFAGR…LKTIGEILGD (173 aa)). GTP-binding positions include 30 to 37 (GRSNVGKS), 56 to 60 (GKTRS), 74 to 77 (DLPG), 141 to 144 (TKSD), and 173 to 175 (FSS). Mg(2+) is bound by residues serine 37 and threonine 58.

It belongs to the TRAFAC class TrmE-Era-EngA-EngB-Septin-like GTPase superfamily. EngB GTPase family. Mg(2+) serves as cofactor.

In terms of biological role, necessary for normal cell division and for the maintenance of normal septation. In Petrotoga mobilis (strain DSM 10674 / SJ95), this protein is Probable GTP-binding protein EngB.